Consider the following 118-residue polypeptide: Ribosome-binding factor A (118 aa).

The protein belongs to the RbfA family. Monomer. Binds 30S ribosomal subunits, but not 50S ribosomal subunits or 70S ribosomes.

Its subcellular location is the cytoplasm. Its function is as follows. One of several proteins that assist in the late maturation steps of the functional core of the 30S ribosomal subunit. Associates with free 30S ribosomal subunits (but not with 30S subunits that are part of 70S ribosomes or polysomes). Required for efficient processing of 16S rRNA. May interact with the 5'-terminal helix region of 16S rRNA. The polypeptide is Ribosome-binding factor A (Bacillus cereus (strain AH187)).